The following is a 427-amino-acid chain: Probable protein phosphatase 2C 64 (427 aa).

Residues 1–36 (MGNCVARSGTAVDAGGDGGEDGKRRRRRWKAPREDQ) form a disordered region. The PPM-type phosphatase domain occupies 53 to 331 (TATVYTQQGR…DDCAVVCLYL (279 aa)). Mn(2+) is bound by residues D89, G90, D276, and D322.

The protein belongs to the PP2C family. The cofactor is Mg(2+). Mn(2+) is required as a cofactor.

The catalysed reaction is O-phospho-L-seryl-[protein] + H2O = L-seryl-[protein] + phosphate. The enzyme catalyses O-phospho-L-threonyl-[protein] + H2O = L-threonyl-[protein] + phosphate. In Oryza sativa subsp. japonica (Rice), this protein is Probable protein phosphatase 2C 64.